Here is a 183-residue protein sequence, read N- to C-terminus: Inner membrane-spanning protein YciB (183 aa).

Transmembrane regions (helical) follow at residues 4–24 (FIEFIPLIVFFAVYKFYDIYM), 50–70 (MQLFTFLLVGFFGGLTVFFHD), 72–92 (TFIKWKVTVINVLFALGLLIS), 119–139 (VNLGWAGFFTVCGLLNLYVAF), and 149–169 (FKVFGLLGMTLVFTLLSGVYL).

Belongs to the YciB family.

The protein localises to the cell inner membrane. Functionally, plays a role in cell envelope biogenesis, maintenance of cell envelope integrity and membrane homeostasis. In Aeromonas hydrophila subsp. hydrophila (strain ATCC 7966 / DSM 30187 / BCRC 13018 / CCUG 14551 / JCM 1027 / KCTC 2358 / NCIMB 9240 / NCTC 8049), this protein is Inner membrane-spanning protein YciB.